Consider the following 185-residue polypeptide: Elongation factor P (185 aa).

The protein belongs to the elongation factor P family.

It is found in the cytoplasm. It participates in protein biosynthesis; polypeptide chain elongation. In terms of biological role, involved in peptide bond synthesis. Stimulates efficient translation and peptide-bond synthesis on native or reconstituted 70S ribosomes in vitro. Probably functions indirectly by altering the affinity of the ribosome for aminoacyl-tRNA, thus increasing their reactivity as acceptors for peptidyl transferase. The protein is Elongation factor P of Methylobacillus flagellatus (strain ATCC 51484 / DSM 6875 / VKM B-1610 / KT).